Consider the following 324-residue polypeptide: Biotin synthase 1 (324 aa).

The 220-residue stretch at 37–256 (NAIETASLLS…VALARILMPA (220 aa)) folds into the Radical SAM core domain. [4Fe-4S] cluster-binding residues include cysteine 52, cysteine 56, and cysteine 59. [2Fe-2S] cluster contacts are provided by cysteine 96, cysteine 127, cysteine 187, and arginine 260.

It belongs to the radical SAM superfamily. Biotin synthase family. In terms of assembly, homodimer. [4Fe-4S] cluster is required as a cofactor. The cofactor is [2Fe-2S] cluster.

The catalysed reaction is (4R,5S)-dethiobiotin + (sulfur carrier)-SH + 2 reduced [2Fe-2S]-[ferredoxin] + 2 S-adenosyl-L-methionine = (sulfur carrier)-H + biotin + 2 5'-deoxyadenosine + 2 L-methionine + 2 oxidized [2Fe-2S]-[ferredoxin]. It functions in the pathway cofactor biosynthesis; biotin biosynthesis; biotin from 7,8-diaminononanoate: step 2/2. In terms of biological role, catalyzes the conversion of dethiobiotin (DTB) to biotin by the insertion of a sulfur atom into dethiobiotin via a radical-based mechanism. This is Biotin synthase 1 from Paracoccus denitrificans (strain Pd 1222).